The following is a 401-amino-acid chain: NADH-quinone oxidoreductase subunit D 2 (401 aa).

This sequence belongs to the complex I 49 kDa subunit family. As to quaternary structure, NDH-1 is composed of 14 different subunits. Subunits NuoB, C, D, E, F, and G constitute the peripheral sector of the complex.

It is found in the cell inner membrane. The enzyme catalyses a quinone + NADH + 5 H(+)(in) = a quinol + NAD(+) + 4 H(+)(out). NDH-1 shuttles electrons from NADH, via FMN and iron-sulfur (Fe-S) centers, to quinones in the respiratory chain. The immediate electron acceptor for the enzyme in this species is believed to be ubiquinone. Couples the redox reaction to proton translocation (for every two electrons transferred, four hydrogen ions are translocated across the cytoplasmic membrane), and thus conserves the redox energy in a proton gradient. This Koribacter versatilis (strain Ellin345) protein is NADH-quinone oxidoreductase subunit D 2.